The primary structure comprises 367 residues: tRNA-specific 2-thiouridylase MnmA (367 aa).

ATP contacts are provided by residues 13–20 and Met-39; that span reads GLSGGVDS. Residues 99–101 form an interaction with target base in tRNA region; sequence NPD. The Nucleophile role is filled by Cys-104. The cysteines at positions 104 and 200 are disulfide-linked. Gly-128 provides a ligand contact to ATP. An interaction with tRNA region spans residues 150–152; sequence KDQ. Cys-200 acts as the Cysteine persulfide intermediate in catalysis. An interaction with tRNA region spans residues 307–308; that stretch reads RY.

The protein belongs to the MnmA/TRMU family.

It localises to the cytoplasm. It catalyses the reaction S-sulfanyl-L-cysteinyl-[protein] + uridine(34) in tRNA + AH2 + ATP = 2-thiouridine(34) in tRNA + L-cysteinyl-[protein] + A + AMP + diphosphate + H(+). Catalyzes the 2-thiolation of uridine at the wobble position (U34) of tRNA, leading to the formation of s(2)U34. In Neisseria gonorrhoeae (strain ATCC 700825 / FA 1090), this protein is tRNA-specific 2-thiouridylase MnmA.